The chain runs to 425 residues: ADP-ribose glycohydrolase MACROD2 (425 aa).

Positions 59–240 constitute a Macro domain; it reads QETSQVKKSL…IYKKKMNEFF (182 aa). Substrate contacts are provided by residues 77–79, 90–92, and 97–102; these read GDI, AAN, and GGGGVD. K170 is covalently cross-linked (Glycyl lysine isopeptide (Lys-Gly) (interchain with G-Cter in ubiquitin)). Residues 185–191 and F224 contribute to the substrate site; that span reads ISTGIYG. Positions 243 to 425 are disordered; sequence DDNNEEEEDV…EAKEQRNGTK (183 aa). The span at 244-262 shows a compositional bias: acidic residues; sequence DNNEEEEDVEMKEDSDENG. A compositionally biased stretch (basic and acidic residues) spans 302 to 343; it reads EDFAKDENITKGGEVTDHSVRDQDHPDGQENDSTKNEIKIET. The span at 344 to 360 shows a compositional bias: polar residues; the sequence is ESQSSYMETEELSSNQE. 2 stretches are compositionally biased toward basic and acidic residues: residues 381 to 391 and 415 to 425; these read EGEKAPGEDTP and DEAKEQRNGTK.

Belongs to the MacroD-type family. MacroD1/2-like subfamily. Interacts with ADP-ribosylated PARP1.

It is found in the nucleus. It carries out the reaction 2''-O-acetyl-ADP-D-ribose + H2O = ADP-D-ribose + acetate + H(+). The enzyme catalyses 4-O-(ADP-D-ribosyl)-L-aspartyl-[protein] + H2O = L-aspartyl-[protein] + ADP-D-ribose + H(+). The catalysed reaction is 5-O-(ADP-D-ribosyl)-L-glutamyl-[protein] + H2O = L-glutamyl-[protein] + ADP-D-ribose + H(+). It catalyses the reaction alpha-NAD(+) + H2O = ADP-D-ribose + nicotinamide + H(+). Subject to product inhibition by ADP-ribose. In terms of biological role, removes ADP-ribose from aspartate and glutamate residues in proteins bearing a single ADP-ribose moiety. Inactive towards proteins bearing poly-ADP-ribose. Deacetylates O-acetyl-ADP ribose, a signaling molecule generated by the deacetylation of acetylated lysine residues in histones and other proteins. This Homo sapiens (Human) protein is ADP-ribose glycohydrolase MACROD2.